The following is a 155-amino-acid chain: 6,7-dimethyl-8-ribityllumazine synthase (155 aa).

Residues Phe23, 57-59 (AYE), and 81-83 (AVI) contribute to the 5-amino-6-(D-ribitylamino)uracil site. 86–87 (AT) serves as a coordination point for (2S)-2-hydroxy-3-oxobutyl phosphate. His89 serves as the catalytic Proton donor. Phe114 lines the 5-amino-6-(D-ribitylamino)uracil pocket. Arg128 contributes to the (2S)-2-hydroxy-3-oxobutyl phosphate binding site.

The protein belongs to the DMRL synthase family.

It carries out the reaction (2S)-2-hydroxy-3-oxobutyl phosphate + 5-amino-6-(D-ribitylamino)uracil = 6,7-dimethyl-8-(1-D-ribityl)lumazine + phosphate + 2 H2O + H(+). It functions in the pathway cofactor biosynthesis; riboflavin biosynthesis; riboflavin from 2-hydroxy-3-oxobutyl phosphate and 5-amino-6-(D-ribitylamino)uracil: step 1/2. Functionally, catalyzes the formation of 6,7-dimethyl-8-ribityllumazine by condensation of 5-amino-6-(D-ribitylamino)uracil with 3,4-dihydroxy-2-butanone 4-phosphate. This is the penultimate step in the biosynthesis of riboflavin. The chain is 6,7-dimethyl-8-ribityllumazine synthase from Desulfotalea psychrophila (strain LSv54 / DSM 12343).